A 191-amino-acid chain; its full sequence is Fe/S biogenesis protein NfuA (191 aa).

Residues Cys149 and Cys152 each contribute to the [4Fe-4S] cluster site.

Belongs to the NfuA family. Homodimer. It depends on [4Fe-4S] cluster as a cofactor.

Involved in iron-sulfur cluster biogenesis. Binds a 4Fe-4S cluster, can transfer this cluster to apoproteins, and thereby intervenes in the maturation of Fe/S proteins. Could also act as a scaffold/chaperone for damaged Fe/S proteins. The sequence is that of Fe/S biogenesis protein NfuA from Erwinia tasmaniensis (strain DSM 17950 / CFBP 7177 / CIP 109463 / NCPPB 4357 / Et1/99).